Here is a 250-residue protein sequence, read N- to C-terminus: L-ascorbate peroxidase 1, cytosolic (250 aa).

H42 acts as the Proton acceptor in catalysis. Residues 113-137 (VPFHPGREDKPAPPPEGRLPDATKG) are disordered. Heme b is bound at residue H163. Positions 164, 180, 182, and 187 each coordinate K(+).

Belongs to the peroxidase family. Ascorbate peroxidase subfamily. The cofactor is heme b. In terms of tissue distribution, expressed in roots, aerial vegetative parts and reproductive organs. Expressed in roots, leaves, stems and flowers.

The protein resides in the cytoplasm. It carries out the reaction L-ascorbate + H2O2 = L-dehydroascorbate + 2 H2O. Its activity is regulated as follows. Inhibited by p-chloromercuriphenylsulfonic acid (CMPSA). In terms of biological role, plays a key role in hydrogen peroxide removal. The protein is L-ascorbate peroxidase 1, cytosolic of Oryza sativa subsp. japonica (Rice).